A 220-amino-acid chain; its full sequence is Cytidylate kinase (220 aa).

Residue 11-19 (GPTASGKGT) coordinates ATP.

The protein belongs to the cytidylate kinase family. Type 1 subfamily.

It is found in the cytoplasm. It carries out the reaction CMP + ATP = CDP + ADP. The enzyme catalyses dCMP + ATP = dCDP + ADP. This chain is Cytidylate kinase, found in Polynucleobacter asymbioticus (strain DSM 18221 / CIP 109841 / QLW-P1DMWA-1) (Polynucleobacter necessarius subsp. asymbioticus).